A 346-amino-acid polypeptide reads, in one-letter code: Phosphoribosylformylglycinamidine cyclo-ligase (346 aa).

This sequence belongs to the AIR synthase family.

The protein localises to the cytoplasm. The catalysed reaction is 2-formamido-N(1)-(5-O-phospho-beta-D-ribosyl)acetamidine + ATP = 5-amino-1-(5-phospho-beta-D-ribosyl)imidazole + ADP + phosphate + H(+). It functions in the pathway purine metabolism; IMP biosynthesis via de novo pathway; 5-amino-1-(5-phospho-D-ribosyl)imidazole from N(2)-formyl-N(1)-(5-phospho-D-ribosyl)glycinamide: step 2/2. In Erwinia tasmaniensis (strain DSM 17950 / CFBP 7177 / CIP 109463 / NCPPB 4357 / Et1/99), this protein is Phosphoribosylformylglycinamidine cyclo-ligase.